Consider the following 1487-residue polypeptide: Collagen alpha-1(II) chain (1487 aa).

Residues 1–25 (MIRLGAPQSLVLLTLLIAAVLRCQG) form the signal peptide. A propeptide spans 26-181 (QDAQEAGSCL…PGLSAGNFAA (156 aa)) (N-terminal propeptide). The VWFC domain maps to 32–89 (GSCLQNGQRYKDKDVWKPSSCRICVCDTGNVLCDDIICEDPDCLNPEIPFGECCPICP). Residues 96–179 (SGKLGPKGQK…GPPGLSAGNF (84 aa)) form a disordered region. Composition is skewed to basic and acidic residues over residues 104 to 115 (QKGEPGDIRDII) and 132 to 153 (PRGD…RDGE). A compositionally biased stretch (pro residues) spans 157 to 172 (PGNPGPAGPPGPPGPP). K190 carries the post-translational modification 5-hydroxylysine. K190 is a glycosylation site (O-linked (Gal...) hydroxylysine). Residues 191–1237 (AGGAQMGVMQ…QREKGPDPMQ (1047 aa)) are disordered. A compositionally biased stretch (low complexity) spans 192 to 203 (GGAQMGVMQGPM). A triple-helical region region spans residues 201–1214 (GPMGPMGPRG…PGPPGPPGPP (1014 aa)). Pro residues predominate over residues 208-217 (PRGPPGPAGA). Positions 218–239 (PGPQGFQGNPGEPGEPGVSGPM) are enriched in low complexity. A compositionally biased stretch (basic and acidic residues) spans 251–265 (PGDDGEAGKPGKSGE). A 5-hydroxylysine mark is found at K287, K299, and K308. O-linked (Gal...) hydroxylysine glycans are attached at residues K287, K299, and K308. Low complexity-rich tracts occupy residues 310–320 (ESGSPGENGSP) and 335–350 (TGPA…DGQP). Over residues 360-369 (GPAGGPGFPG) the composition is skewed to gly residues. Composition is skewed to low complexity over residues 370–382 (APGA…PTGA) and 403–431 (PAGA…AGAP). The residue at position 374 (K374) is a 5-hydroxylysine. O-linked (Gal...) hydroxylysine glycosylation is present at K374. Positions 433–442 (FPGPRGPPGP) are enriched in pro residues. Residues 472-485 (ETGPAGPQGAPGPA) are compositionally biased toward low complexity. 2 positions are modified to 5-hydroxylysine: K608 and K620. Residues K608 and K620 are each glycosylated (O-linked (Gal...) hydroxylysine). Positions 622 to 631 (LAGAPGLRGL) are enriched in low complexity. P659 and P668 each carry 4-hydroxyproline. P670 is subject to 3-hydroxyproline. 4-hydroxyproline is present on residues P671 and P674. Residues 706-736 (ERGSPGAQGLQGPRGLPGTPGTDGPKGAAGP) show a composition bias toward low complexity. The segment covering 764 to 775 (KGDRGDVGEKGP) has biased composition (basic and acidic residues). Low complexity-rich tracts occupy residues 833–848 (AGFA…PGAK) and 877–914 (PTGV…NGNP). P907 carries the post-translational modification 3-hydroxyproline. Residues P908, P914, and P920 each carry the 4-hydroxyproline modification. A compositionally biased stretch (low complexity) spans 962-980 (DGPSGLDGPPGPQGLAGQR). The segment covering 1069–1079 (APGPPGSPGPA) has biased composition (pro residues). Positions 1115-1129 (RGDKGESGEQGERGL) are enriched in basic and acidic residues. A 3-hydroxyproline modification is found at P1144. 2 stretches are compositionally biased toward low complexity: residues 1148-1157 (SGDQGASGPA) and 1171-1181 (PSGKDGSNGIP). P1181 carries the 4-hydroxyproline modification. The residue at position 1186 (P1186) is a 3-hydroxyproline. P1187 carries the 4-hydroxyproline modification. Over residues 1199–1216 (VGPPGSPGPPGPPGPPGP) the composition is skewed to pro residues. 3-hydroxyproline is present on P1201. 4-hydroxyproline is present on residues P1202 and P1205. P1207 carries the 3-hydroxyproline modification. Residues P1208 and P1211 each carry the 4-hydroxyproline modification. P1213 carries the 3-hydroxyproline modification. P1214 bears the 4-hydroxyproline mark. Residues 1215 to 1241 (GPGIDMSAFAGLGQREKGPDPMQYMRA) form a nonhelical region (C-terminal) region. Residues 1253–1487 (VEVDATLKSL…GVDIGPVCFL (235 aa)) form the Fibrillar collagen NC1 domain. Disulfide bonds link C1283-C1315, C1323-C1485, and C1393-C1438. Ca(2+)-binding residues include D1301, N1303, Q1304, C1306, and D1309.

It belongs to the fibrillar collagen family. As to quaternary structure, homotrimers of alpha 1(II) chains. In terms of processing, contains mostly 4-hydroxyproline. Prolines at the third position of the tripeptide repeating unit (G-X-P) are 4-hydroxylated in some or all of the chains. Post-translationally, contains 3-hydroxyproline at a few sites. This modification occurs on the first proline residue in the sequence motif Gly-Pro-Hyp, where Hyp is 4-hydroxyproline. Lysine residues at the third position of the tripeptide repeating unit (G-X-Y) are 5-hydroxylated in some or all of the chains. In terms of processing, O-glycosylated on hydroxylated lysine residues. The O-linked glycan consists of a Glc-Gal disaccharide.

It is found in the secreted. The protein resides in the extracellular space. It localises to the extracellular matrix. Functionally, type II collagen is specific for cartilaginous tissues. It is essential for the normal embryonic development of the skeleton, for linear growth and for the ability of cartilage to resist compressive forces. In Mus musculus (Mouse), this protein is Collagen alpha-1(II) chain.